A 147-amino-acid chain; its full sequence is Large ribosomal subunit protein uL16 (147 aa).

The segment at 1-20 is disordered; it reads MLMPKKVKHRKVQRGRMKGK.

It belongs to the universal ribosomal protein uL16 family. As to quaternary structure, part of the 50S ribosomal subunit.

Binds 23S rRNA and is also seen to make contacts with the A and possibly P site tRNAs. The chain is Large ribosomal subunit protein uL16 from Clostridium kluyveri (strain ATCC 8527 / DSM 555 / NBRC 12016 / NCIMB 10680 / K1).